A 957-amino-acid polypeptide reads, in one-letter code: Glycine dehydrogenase (decarboxylating) (957 aa).

At Lys708 the chain carries N6-(pyridoxal phosphate)lysine.

Belongs to the GcvP family. In terms of assembly, the glycine cleavage system is composed of four proteins: P, T, L and H. Requires pyridoxal 5'-phosphate as cofactor.

It carries out the reaction N(6)-[(R)-lipoyl]-L-lysyl-[glycine-cleavage complex H protein] + glycine + H(+) = N(6)-[(R)-S(8)-aminomethyldihydrolipoyl]-L-lysyl-[glycine-cleavage complex H protein] + CO2. Its function is as follows. The glycine cleavage system catalyzes the degradation of glycine. The P protein binds the alpha-amino group of glycine through its pyridoxal phosphate cofactor; CO(2) is released and the remaining methylamine moiety is then transferred to the lipoamide cofactor of the H protein. This chain is Glycine dehydrogenase (decarboxylating), found in Pectobacterium atrosepticum (strain SCRI 1043 / ATCC BAA-672) (Erwinia carotovora subsp. atroseptica).